A 928-amino-acid chain; its full sequence is TBC1 domain family member 2A (928 aa).

M1 is subject to N-acetylmethionine. Residues 1–19 (MEGAGENAPESSSSAPGSE) show a composition bias toward low complexity. The interval 1-39 (MEGAGENAPESSSSAPGSEESARDPQVPPPEEESGDCAR) is disordered. The interaction with CADH1 stretch occupies residues 1–169 (MEGAGENAPE…AGNGPVLHLE (169 aa)). Residues 45–142 (PKKLCGYLSK…WLQQLQMKRW (98 aa)) enclose the PH domain. Positions 225–275 (NKQAQGTGHEPPGEDSPQSGEPQREEQPLASDASTPGREPEDSPKPAPKPS) are disordered. The interval 295–433 (SEGITRNRTA…KVTQDFTHPP (139 aa)) is interaction with RAC1. Residues 298–416 (ITRNRTAQEK…LMDKNHAKQQ (119 aa)) are a coiled coil. S436 is modified (phosphoserine). One can recognise a Rab-GAP TBC domain in the interval 625-817 (GVPREHRPRV…RVWDAFLYEG (193 aa)). Residues 875–913 (MKQLRQLRMVHRERLEAELRELEQLKAEYLERRASRRRA) are a coiled coil. Residues S915 and S920 each carry the phosphoserine modification.

In terms of assembly, interacts with activated RAC1 and CDH1. In terms of tissue distribution, expressed in a broad range of tissues, especially in kidney, liver, lung and placenta. Also expressed in keratinocytes and epithelia-containing organs. Isoform 2 is differentially expressed in prostate normal and cancer cells (at protein level).

It localises to the cytoplasm. The protein resides in the cytoplasmic vesicle. It is found in the cell junction. Functionally, acts as a GTPase-activating protein for RAB7A. Signal effector acting as a linker between RAC1 and RAB7A, leading to RAB7A inactivation and subsequent inhibition of cadherin degradation and reduced cell-cell adhesion. The protein is TBC1 domain family member 2A (TBC1D2) of Homo sapiens (Human).